The following is a 260-amino-acid chain: Carbonic anhydrase (260 aa).

Residues 1–31 form a disordered region; that stretch reads MAHAWGYGPADGPESWAESFPIANGPRQSPI. One can recognise an Alpha-carbonic anhydrase domain in the interval 3-259; it reads HAWGYGPADG…LKGRKVRASF (257 aa). Residue H64 is the Proton acceptor of the active site. 3 residues coordinate Zn(2+): H94, H96, and H119. The active site involves Y127. 198-199 provides a ligand contact to substrate; sequence TT.

Belongs to the alpha-carbonic anhydrase family. Zn(2+) is required as a cofactor.

It catalyses the reaction hydrogencarbonate + H(+) = CO2 + H2O. Its function is as follows. Reversible hydration of carbon dioxide. The sequence is that of Carbonic anhydrase (cahz) from Danio rerio (Zebrafish).